We begin with the raw amino-acid sequence, 345 residues long: Tetraacyldisaccharide 4'-kinase (345 aa).

61–68 provides a ligand contact to ATP; that stretch reads TAGGTGKT.

The protein belongs to the LpxK family.

The enzyme catalyses a lipid A disaccharide + ATP = a lipid IVA + ADP + H(+). The protein operates within glycolipid biosynthesis; lipid IV(A) biosynthesis; lipid IV(A) from (3R)-3-hydroxytetradecanoyl-[acyl-carrier-protein] and UDP-N-acetyl-alpha-D-glucosamine: step 6/6. In terms of biological role, transfers the gamma-phosphate of ATP to the 4'-position of a tetraacyldisaccharide 1-phosphate intermediate (termed DS-1-P) to form tetraacyldisaccharide 1,4'-bis-phosphate (lipid IVA). This is Tetraacyldisaccharide 4'-kinase from Xanthomonas euvesicatoria pv. vesicatoria (strain 85-10) (Xanthomonas campestris pv. vesicatoria).